The chain runs to 338 residues: Formamidase (338 aa).

The region spanning 14–257 (VGIGLVQLQL…NEIITAEVRP (244 aa)) is the CN hydrolase domain. Catalysis depends on Glu-60, which acts as the Proton acceptor. Lys-129 (proton donor) is an active-site residue. Residue Cys-162 is the Nucleophile of the active site.

The protein belongs to the carbon-nitrogen hydrolase superfamily. Aliphatic amidase family.

The enzyme catalyses formamide + H2O = formate + NH4(+). Is an aliphatic amidase with a restricted substrate specificity, as it only hydrolyzes formamide. This is Formamidase from Allorhizobium ampelinum (strain ATCC BAA-846 / DSM 112012 / S4) (Agrobacterium vitis (strain S4)).